The primary structure comprises 302 residues: Putative fructose-bisphosphate aldolase (302 aa).

Residue Asp86 is the Proton donor of the active site. Residues His87, Asp116, Glu146, and His192 each coordinate Zn(2+). Gly193 is a dihydroxyacetone phosphate binding site. His223 serves as a coordination point for Zn(2+). Residues 224-226 and 245-248 contribute to the dihydroxyacetone phosphate site; these read GAD and NVNR.

It belongs to the class II fructose-bisphosphate aldolase family. Homodimer. The cofactor is Zn(2+).

The catalysed reaction is beta-D-fructose 1,6-bisphosphate = D-glyceraldehyde 3-phosphate + dihydroxyacetone phosphate. It functions in the pathway carbohydrate degradation; glycolysis; D-glyceraldehyde 3-phosphate and glycerone phosphate from D-glucose: step 4/4. Functionally, catalyzes the aldol condensation of dihydroxyacetone phosphate (DHAP or glycerone-phosphate) with glyceraldehyde 3-phosphate (G3P) to form fructose 1,6-bisphosphate (FBP) in gluconeogenesis and the reverse reaction in glycolysis. The polypeptide is Putative fructose-bisphosphate aldolase (Coccidioides immitis (strain RS) (Valley fever fungus)).